A 178-amino-acid chain; its full sequence is Large ribosomal subunit protein uL6 (178 aa).

This sequence belongs to the universal ribosomal protein uL6 family. In terms of assembly, part of the 50S ribosomal subunit.

Its function is as follows. This protein binds to the 23S rRNA, and is important in its secondary structure. It is located near the subunit interface in the base of the L7/L12 stalk, and near the tRNA binding site of the peptidyltransferase center. The protein is Large ribosomal subunit protein uL6 of Helicobacter hepaticus (strain ATCC 51449 / 3B1).